The sequence spans 142 residues: MKTEVAKIENVKRDWYLVDAQEMVLGRLASQIANILRGKNKAIYTPSVDTGDFVIVVNAEKIALTGRKLADKSYYSHSGFPGGLKEISAGKLLEKKPEELIKRAVKGMLPKNKLSRHMLKKLKIYAGSSHPHDAQQPKVLAL.

Belongs to the universal ribosomal protein uL13 family. In terms of assembly, part of the 50S ribosomal subunit.

Its function is as follows. This protein is one of the early assembly proteins of the 50S ribosomal subunit, although it is not seen to bind rRNA by itself. It is important during the early stages of 50S assembly. This is Large ribosomal subunit protein uL13 from Pelobacter propionicus (strain DSM 2379 / NBRC 103807 / OttBd1).